Consider the following 504-residue polypeptide: Cytochrome P450 3A16 (504 aa).

Cys-443 is a heme binding site.

Belongs to the cytochrome P450 family. Heme is required as a cofactor.

It localises to the endoplasmic reticulum membrane. Its subcellular location is the microsome membrane. The enzyme catalyses an organic molecule + reduced [NADPH--hemoprotein reductase] + O2 = an alcohol + oxidized [NADPH--hemoprotein reductase] + H2O + H(+). Its function is as follows. Cytochromes P450 are a group of heme-thiolate monooxygenases. In liver microsomes, this enzyme is involved in an NADPH-dependent electron transport pathway. It oxidizes a variety of structurally unrelated compounds, including steroids, fatty acids, and xenobiotics. The sequence is that of Cytochrome P450 3A16 (Cyp3a16) from Mus musculus (Mouse).